Here is a 402-residue protein sequence, read N- to C-terminus: Serine/threonine transporter SstT (402 aa).

9 helical membrane passes run 19–39, 43–63, 86–106, 138–158, 179–199, 212–232, 287–307, 327–347, and 354–374; these read IGVV…AIGL, LFVG…VISA, TFAA…TLIL, AITE…GLAM, VVKW…FTSI, LLIL…NPII, IPLG…ILTL, VVAA…LLLI, and FGIS…VGVI.

Belongs to the dicarboxylate/amino acid:cation symporter (DAACS) (TC 2.A.23) family.

It localises to the cell membrane. It catalyses the reaction L-serine(in) + Na(+)(in) = L-serine(out) + Na(+)(out). It carries out the reaction L-threonine(in) + Na(+)(in) = L-threonine(out) + Na(+)(out). In terms of biological role, involved in the import of serine and threonine into the cell, with the concomitant import of sodium (symport system). This is Serine/threonine transporter SstT from Streptococcus agalactiae serotype III (strain NEM316).